A 442-amino-acid chain; its full sequence is Trigger factor (442 aa).

Residues 162–247 (GDQVTIDAIG…IKAVHTSEPT (86 aa)) enclose the PPIase FKBP-type domain.

Belongs to the FKBP-type PPIase family. Tig subfamily.

It is found in the cytoplasm. It catalyses the reaction [protein]-peptidylproline (omega=180) = [protein]-peptidylproline (omega=0). Its function is as follows. Involved in protein export. Acts as a chaperone by maintaining the newly synthesized protein in an open conformation. Functions as a peptidyl-prolyl cis-trans isomerase. The protein is Trigger factor of Rickettsia canadensis (strain McKiel).